The following is a 139-amino-acid chain: Putative lipoprotein LpqV (139 aa).

A signal peptide spans 1–25; sequence MRPSRYAPLLCAMVLALAWLSAVAG. Cys26 carries N-palmitoyl cysteine lipidation. Residue Cys26 is the site of S-diacylglycerol cysteine attachment.

It is found in the cell membrane. This is Putative lipoprotein LpqV (lpqV) from Mycobacterium bovis (strain ATCC BAA-935 / AF2122/97).